The chain runs to 142 residues: Small ribosomal subunit protein uS9 (142 aa).

This sequence belongs to the universal ribosomal protein uS9 family.

This Debaryomyces hansenii (strain ATCC 36239 / CBS 767 / BCRC 21394 / JCM 1990 / NBRC 0083 / IGC 2968) (Yeast) protein is Small ribosomal subunit protein uS9 (RPS16).